Reading from the N-terminus, the 61-residue chain is Metallothionein-2 (61 aa).

M1 carries the post-translational modification N-acetylmethionine. The beta stretch occupies residues 1 to 29; sequence MDPNCSCVAGDSCTCAGSCKCKECKCTSC. A divalent metal cation is bound by residues C5, C7, C13, C15, C19, C21, C24, C26, C29, C33, C34, C36, C37, C41, C44, C48, C50, C57, C59, and C60. Residues 20-25 are antigenic epitope; it reads KCKECK. An alpha region spans residues 30–61; sequence KKSCCSCCPVGCAKCAQGCICKGASDKCNCCA.

Belongs to the metallothionein superfamily. Type 1 family.

In terms of biological role, metallothioneins have a high content of cysteine residues that bind various heavy metals; these proteins are transcriptionally regulated by both heavy metals and glucocorticoids. The chain is Metallothionein-2 (MT2) from Macaca fascicularis (Crab-eating macaque).